Here is a 478-residue protein sequence, read N- to C-terminus: Quinoprotein glucose dehydrogenase B (478 aa).

The signal sequence occupies residues 1 to 24 (MNKHLLAKIALLSAVQLVTLSAFA). Gln100 and Asp167 together coordinate D-glucose. His168 serves as the catalytic Proton acceptor. Gln192 and Arg252 together coordinate D-glucose. The segment at 252–253 (RN) is PQQ. Positions 271, 272, 277, 287, 293, 295, 297, and 333 each coordinate Ca(2+). 3 residues coordinate pyrroloquinoline quinone: Tyr367, Thr372, and Lys401. The segment at 430–432 (RYR) is PQQ.

It belongs to the PQQ oxidoreductase GdhB family. In terms of assembly, homodimer. Pyrroloquinoline quinone is required as a cofactor. Requires Ca(2+) as cofactor.

The enzyme catalyses a ubiquinone + D-glucose = D-glucono-1,5-lactone + a ubiquinol. Its function is as follows. Oxidizes glucose to gluconolactone. This chain is Quinoprotein glucose dehydrogenase B (gdhB), found in Acinetobacter calcoaceticus.